The following is a 307-amino-acid chain: Coproporphyrin III ferrochelatase (307 aa).

Fe-coproporphyrin III contacts are provided by residues Tyr-12, Arg-29, 45–46, Ser-53, and Tyr-124; that span reads RY. 2 residues coordinate Fe(2+): His-181 and Glu-263.

This sequence belongs to the ferrochelatase family.

It is found in the cytoplasm. The enzyme catalyses Fe-coproporphyrin III + 2 H(+) = coproporphyrin III + Fe(2+). Its pathway is porphyrin-containing compound metabolism; protoheme biosynthesis. Its function is as follows. Involved in coproporphyrin-dependent heme b biosynthesis. Catalyzes the insertion of ferrous iron into coproporphyrin III to form Fe-coproporphyrin III. In Staphylococcus aureus (strain MRSA252), this protein is Coproporphyrin III ferrochelatase.